The sequence spans 567 residues: Proline--tRNA ligase (567 aa).

This sequence belongs to the class-II aminoacyl-tRNA synthetase family. ProS type 1 subfamily. As to quaternary structure, homodimer.

Its subcellular location is the cytoplasm. It carries out the reaction tRNA(Pro) + L-proline + ATP = L-prolyl-tRNA(Pro) + AMP + diphosphate. Catalyzes the attachment of proline to tRNA(Pro) in a two-step reaction: proline is first activated by ATP to form Pro-AMP and then transferred to the acceptor end of tRNA(Pro). As ProRS can inadvertently accommodate and process non-cognate amino acids such as alanine and cysteine, to avoid such errors it has two additional distinct editing activities against alanine. One activity is designated as 'pretransfer' editing and involves the tRNA(Pro)-independent hydrolysis of activated Ala-AMP. The other activity is designated 'posttransfer' editing and involves deacylation of mischarged Ala-tRNA(Pro). The misacylated Cys-tRNA(Pro) is not edited by ProRS. In Streptomyces griseus subsp. griseus (strain JCM 4626 / CBS 651.72 / NBRC 13350 / KCC S-0626 / ISP 5235), this protein is Proline--tRNA ligase.